The following is a 223-amino-acid chain: MAIIIPESSYERRVKALYEKQIRMEALEGKFIKKVYKFNSNLLDVKEAVLRHQRKVGKLQKVVMERREELEKRVSFMEELAQELEATKLRNLAMKEQIKQRKMIARQRKNEIMERIQTLSKTTGTYVNQEALPARVKGVTVLRGDKRDQLIPFDLNATDAEGLNSLCQHLESLNVDVSQWQQLVSLAMDVAMEARAPTTPPKEVANCKSIIEIDLTSPTSHQA.

Residues 51–119 (RHQRKVGKLQ…NEIMERIQTL (69 aa)) are a coiled coil.

It belongs to the SPC25 family. In terms of assembly, component of the Ndc80 complex, which is composed of Ndc80, Nuf2 and Spc25.

Its subcellular location is the nucleus. It localises to the chromosome. The protein resides in the centromere. It is found in the kinetochore. In terms of biological role, acts as a component of the essential kinetochore-associated Ndc80 complex, which is required for chromosome segregation and spindle checkpoint activity during meiosis and mitosis. Required for kinetochore integrity and the organization of stable microtubule binding sites in the outer plate of the kinetochore. Participates in SAC signaling that responds specifically to disruptions in spindle microtubule dynamics. The NDC80 complex synergistically enhances the affinity of the SKA1 complex for microtubules and may allow the NDC80 complex to track depolymerizing microtubules. In Drosophila teissieri (Fruit fly), this protein is Kinetochore protein Spc25.